Reading from the N-terminus, the 524-residue chain is Alkaline phosphatase, tissue-nonspecific isozyme (524 aa).

The signal sequence occupies residues Met-1 to Ser-17. Asp-60 contributes to the Mg(2+) binding site. 2 residues coordinate Zn(2+): Asp-60 and Ser-110. The active-site Phosphoserine intermediate is Ser-110. Position 110 is a phosphoserine (Ser-110). A disulfide bond links Cys-139 and Cys-201. The N-linked (GlcNAc...) asparagine glycan is linked to Asn-140. Thr-173 contacts Mg(2+). A glycan (N-linked (GlcNAc...) asparagine) is linked at Asn-230. Glu-235 lines the Ca(2+) pocket. N-linked (GlcNAc...) asparagine glycosylation occurs at Asn-271. 2 residues coordinate Ca(2+): Phe-290 and Glu-291. The N-linked (GlcNAc...) asparagine glycan is linked to Asn-303. Asp-306 is a Ca(2+) binding site. Residue Glu-332 coordinates Mg(2+). Residues Asp-337, His-341, Asp-378, and His-379 each coordinate Zn(2+). Asn-430 carries an N-linked (GlcNAc...) asparagine glycan. Residue His-454 participates in Zn(2+) binding. A disulfide bond links Cys-489 and Cys-497. The GPI-anchor amidated glycine moiety is linked to residue Gly-501. A propeptide spans Ser-502–Phe-524 (removed in mature form).

Belongs to the alkaline phosphatase family. As to quaternary structure, homodimer. Requires Mg(2+) as cofactor. It depends on Zn(2+) as a cofactor. Ca(2+) is required as a cofactor. Post-translationally, N-glycosylated. As to expression, widely expressed. Expressed in DRG neurons and spinal cord neurons.

It is found in the cell membrane. It localises to the extracellular vesicle membrane. Its subcellular location is the mitochondrion membrane. The protein resides in the mitochondrion intermembrane space. It catalyses the reaction a phosphate monoester + H2O = an alcohol + phosphate. It carries out the reaction diphosphate + H2O = 2 phosphate + H(+). The enzyme catalyses pyridoxal 5'-phosphate + H2O = pyridoxal + phosphate. The catalysed reaction is phosphoethanolamine + H2O = ethanolamine + phosphate. It catalyses the reaction N-phosphocreatine + H2O = creatine + phosphate. It carries out the reaction ATP + H2O = ADP + phosphate + H(+). The enzyme catalyses ADP + H2O = AMP + phosphate + H(+). The catalysed reaction is AMP + H2O = adenosine + phosphate. With respect to regulation, phosphatase activity is specifically inhibited by 5-((5-chloro-2-methoxyphenyl)sulfonamido)nicotinamide (SBI-425). Its function is as follows. Alkaline phosphatase that metabolizes various phosphate compounds and plays a key role in skeletal mineralization and adaptive thermogenesis. Has broad substrate specificity and can hydrolyze a considerable variety of compounds: however, only a few substrates, such as diphosphate (inorganic pyrophosphate; PPi), pyridoxal 5'-phosphate (PLP) and N-phosphocreatine are natural substrates. Plays an essential role in skeletal and dental mineralization via its ability to hydrolyze extracellular diphosphate, a potent mineralization inhibitor, to phosphate: it thereby promotes hydroxyapatite crystal formation and increases inorganic phosphate concentration. Acts in a non-redundant manner with PHOSPHO1 in skeletal mineralization: while PHOSPHO1 mediates the initiation of hydroxyapatite crystallization in the matrix vesicles (MVs), ALPL/TNAP catalyzes the spread of hydroxyapatite crystallization in the extracellular matrix. Also promotes dephosphorylation of osteopontin (SSP1), an inhibitor of hydroxyapatite crystallization in its phosphorylated state; it is however unclear whether ALPL/TNAP mediates SSP1 dephosphorylation via a direct or indirect manner. Catalyzes dephosphorylation of PLP to pyridoxal (PL), the transportable form of vitamin B6, in order to provide a sufficient amount of PLP in the brain, an essential cofactor for enzymes catalyzing the synthesis of diverse neurotransmitters. Additionally, also able to mediate ATP degradation in a stepwise manner to adenosine, thereby regulating the availability of ligands for purinergic receptors. Also capable of dephosphorylating microbial products, such as lipopolysaccharides (LPS) as well as other phosphorylated small-molecules, such as poly-inosine:cytosine (poly I:C). Acts as a key regulator of adaptive thermogenesis as part of the futile creatine cycle: localizes to the mitochondria of thermogenic fat cells and acts by mediating hydrolysis of N-phosphocreatine to initiate a futile cycle of creatine dephosphorylation and phosphorylation. During the futile creatine cycle, creatine and N-phosphocreatine are in a futile cycle, which dissipates the high energy charge of N-phosphocreatine as heat without performing any mechanical or chemical work. The protein is Alkaline phosphatase, tissue-nonspecific isozyme of Mus musculus (Mouse).